Reading from the N-terminus, the 539-residue chain is Chitin deacetylase 1 (539 aa).

The N-terminal stretch at Met1–Gly23 is a signal peptide. The Chitin-binding type-2 domain occupies Gln42–Leu104. Intrachain disulfides connect Cys80-Cys93, Cys122-Cys134, Cys129-Cys147, Cys141-Cys156, Cys168-Cys180, and Cys173-Cys178. Positions Leu121 to Asp157 constitute an LDL-receptor class A domain. Asp206 contacts Zn(2+). Intrachain disulfides connect Cys230/Cys489, Cys354/Cys361, Cys391/Cys397, Cys497/Cys520, and Cys503/Cys523. N-linked (GlcNAc...) asparagine glycosylation occurs at Asn244. Positions 261 and 265 each coordinate Zn(2+). N-linked (GlcNAc...) asparagine glycosylation occurs at Asn296.

This sequence belongs to the carbohydrate esterase 4 (CE4) family. In terms of assembly, interacts with CPAP3-A1. It depends on Zn(2+) as a cofactor. As to expression, highly expressed in epidermis and head. Moderate expression levels in fat body, Malpighian tubule, testis and midgut. Low expression in silk gland and ovary.

It is found in the secreted. The enzyme catalyses [(1-&gt;4)-N-acetyl-beta-D-glucosaminyl](n) + n H2O = chitosan + n acetate. With respect to regulation, binding to the accessory protein CPAP3-A1 is essential for chitinase activity. Hydrolyzes the N-acetamido groups of N-acetyl-D-glucosamine residues in chitin. This Bombyx mori (Silk moth) protein is Chitin deacetylase 1.